We begin with the raw amino-acid sequence, 230 residues long: Uracil-DNA glycosylase (230 aa).

The active-site Proton acceptor is D65.

Belongs to the uracil-DNA glycosylase (UDG) superfamily. UNG family.

The protein localises to the cytoplasm. The enzyme catalyses Hydrolyzes single-stranded DNA or mismatched double-stranded DNA and polynucleotides, releasing free uracil.. Its function is as follows. Excises uracil residues from the DNA which can arise as a result of misincorporation of dUMP residues by DNA polymerase or due to deamination of cytosine. The chain is Uracil-DNA glycosylase from Pediococcus pentosaceus (strain ATCC 25745 / CCUG 21536 / LMG 10740 / 183-1w).